Reading from the N-terminus, the 210-residue chain is ATP-dependent Clp protease proteolytic subunit (210 aa).

S106 functions as the Nucleophile in the catalytic mechanism. H131 is a catalytic residue.

It belongs to the peptidase S14 family. Fourteen ClpP subunits assemble into 2 heptameric rings which stack back to back to give a disk-like structure with a central cavity, resembling the structure of eukaryotic proteasomes.

The protein localises to the cytoplasm. The catalysed reaction is Hydrolysis of proteins to small peptides in the presence of ATP and magnesium. alpha-casein is the usual test substrate. In the absence of ATP, only oligopeptides shorter than five residues are hydrolyzed (such as succinyl-Leu-Tyr-|-NHMec, and Leu-Tyr-Leu-|-Tyr-Trp, in which cleavage of the -Tyr-|-Leu- and -Tyr-|-Trp bonds also occurs).. Functionally, cleaves peptides in various proteins in a process that requires ATP hydrolysis. Has a chymotrypsin-like activity. Plays a major role in the degradation of misfolded proteins. In Bradyrhizobium sp. (strain BTAi1 / ATCC BAA-1182), this protein is ATP-dependent Clp protease proteolytic subunit.